We begin with the raw amino-acid sequence, 148 residues long: Small ribosomal subunit protein uS9 (148 aa).

The protein belongs to the universal ribosomal protein uS9 family.

In Aedes aegypti (Yellowfever mosquito), this protein is Small ribosomal subunit protein uS9 (RpS16).